A 202-amino-acid polypeptide reads, in one-letter code: CASP-like protein 2B2 (202 aa).

Topologically, residues 1-29 are cytoplasmic; it reads MSYLGVGVSPGNVPVYHGMNLKVIDRRVR. Residues 30 to 50 traverse the membrane as a helical segment; sequence LAELVLRCVICALGVLAAVLV. The Extracellular segment spans residues 51-72; sequence GTDTQVKEIFSIQKKARFTDMK. A helical transmembrane segment spans residues 73–93; it reads ALVFLVVANGIAAAYSLVQGV. Over 94–118 the chain is Cytoplasmic; sequence RCVVGMVKGSVLFSKPLAWVIFSGD. A helical transmembrane segment spans residues 119–139; the sequence is QMMAYLTLSAVAAAVQSASFA. Over 140 to 164 the chain is Extracellular; the sequence is KLGQPDLQWMKICNMYGKFCNQVGE. Residues 165–185 traverse the membrane as a helical segment; that stretch reads GIASALLVSVSMVVLSCISSF. At 186 to 202 the chain is on the cytoplasmic side; that stretch reads SLFRLYGGNKGKDGARW.

This sequence belongs to the Casparian strip membrane proteins (CASP) family. In terms of assembly, homodimer and heterodimers.

Its subcellular location is the cell membrane. This is CASP-like protein 2B2 from Populus trichocarpa (Western balsam poplar).